Consider the following 1227-residue polypeptide: DNA-directed RNA polymerase subunit beta (1227 aa).

It belongs to the RNA polymerase beta chain family. The RNAP catalytic core consists of 2 alpha, 1 beta, 1 beta' and 1 omega subunit. When a sigma factor is associated with the core the holoenzyme is formed, which can initiate transcription.

The enzyme catalyses RNA(n) + a ribonucleoside 5'-triphosphate = RNA(n+1) + diphosphate. DNA-dependent RNA polymerase catalyzes the transcription of DNA into RNA using the four ribonucleoside triphosphates as substrates. The chain is DNA-directed RNA polymerase subunit beta from Chloroflexus aggregans (strain MD-66 / DSM 9485).